Here is a 335-residue protein sequence, read N- to C-terminus: 3-hydroxy-3-methylglutaryl-CoA lyase, cytoplasmic (335 aa).

The N-myristoyl glycine moiety is linked to residue G2. The Pyruvate carboxyltransferase domain occupies 43–310 (VKIVEVGPRD…ETGVDLLKVM (268 aa)). R51 contacts substrate. An a divalent metal cation-binding site is contributed by D52. K58 carries the post-translational modification N6-acetyllysine. H243 and H245 together coordinate a divalent metal cation. Residue C276 is part of the active site. An a divalent metal cation-binding site is contributed by N285.

It belongs to the HMG-CoA lyase family. The cofactor is a divalent metal cation.

It is found in the cytoplasm. The protein localises to the cytosol. Its subcellular location is the endoplasmic reticulum membrane. The enzyme catalyses (3S)-3-hydroxy-3-methylglutaryl-CoA = acetoacetate + acetyl-CoA. It functions in the pathway metabolic intermediate metabolism; (S)-3-hydroxy-3-methylglutaryl-CoA degradation; acetoacetate from (S)-3-hydroxy-3-methylglutaryl-CoA: step 1/1. Non-mitochondrial 3-hydroxy-3-methylglutaryl-CoA lyase that catalyzes a cation-dependent cleavage of (S)-3-hydroxy-3-methylglutaryl-CoA into acetyl-CoA and acetoacetate, a key step in ketogenesis, the products of which support energy production in nonhepatic animal tissues. The protein is 3-hydroxy-3-methylglutaryl-CoA lyase, cytoplasmic (hmgcll1) of Danio rerio (Zebrafish).